A 738-amino-acid chain; its full sequence is MTDAPFDRADIDALLGARHPDPFACLGPHRVGDATVVRTLLPGALRVRAIAAGGGVLGELRQVDPAGCFAGALPDGRERGERPRYRLSIDWPDARQDVEDAYAFGTLLDEDALARFAAGDPRAALACLGARALDMDGVPGVRFAVWAPGASRVSVVGDFNGWDARRHPMRLRRPWGVWELFVPRIGAGERYKFALRARDGAALPLKADPCACRTEAPPRTASIVADLDALERFGWHDDAWLRARASLDLAHAPVSIYEVHPESWLRVAAEGNRSATWDELAQRLIPYAAGMGFSHVELTPIAEYPFGGSWGYQSLSPFAPSARFGPPEGFARFVEHAHAAGLGVIVDWVPAHFPDDPHGLGKFDGTALFEHADPREGWHPDWHTHVFNVGRREVGAFLIASALAWAHRYHVDGIRVDAVASMLYRDYSRAAGEWVPNVYGGRENLESIAFLKHFNDTLHGPAAPPGVATFAEESTAWPGVTAPTAEHGLGFDFKWNMGWMHDTLAYLREDPIHRRHHHDRLTFGLVYAFSERFVLPLSHDEVVHGKGSLAAKMPGDAWQRLANLRAYFGFMWAHPGKKLLFMGGEFAQWEEFAHDATPQWDLLDAPAHRGVQRLVRDLNRLHAAEPALHALDDRPAGFAWLVGDDRNNSVFAFVRRDDAGRMLVAVCNFTPVPRTDYRLGLPAPGRWAEVLNTDGAAYGGTDAGNGGAVQADEIPAHGERWSAALRLPPLATLWLRPA.

Asp-417 serves as the catalytic Nucleophile. The active-site Proton donor is the Glu-472.

This sequence belongs to the glycosyl hydrolase 13 family. GlgB subfamily. In terms of assembly, monomer.

It carries out the reaction Transfers a segment of a (1-&gt;4)-alpha-D-glucan chain to a primary hydroxy group in a similar glucan chain.. It functions in the pathway glycan biosynthesis; glycogen biosynthesis. Functionally, catalyzes the formation of the alpha-1,6-glucosidic linkages in glycogen by scission of a 1,4-alpha-linked oligosaccharide from growing alpha-1,4-glucan chains and the subsequent attachment of the oligosaccharide to the alpha-1,6 position. This Burkholderia pseudomallei (strain 668) protein is 1,4-alpha-glucan branching enzyme GlgB.